We begin with the raw amino-acid sequence, 321 residues long: MAAATRSCRPWGSLLGLIWLVSAAAASWDLSSLRCNFGSFCECDFQPDFQGLECDLAQHLAGQHLARSLVVKALKAFLQDPAPTKPLVLSLHGWTGTGKSYVSSLLAHYLFRDGLRSPHVHHFSPVIHFPHPSHLERYKKDLKSWVQGNLTVCSRSLFLFDEMDKLAPGLIEVLRPFLGSSWVVYGTNYRKAIFIFISNTGGEQINQVVLEAWRSRREREEIGLQELGPVISQAVLDNPHHGFWRSGIMEEHLLDVLVPFLPLQRHHVRHCVLNELAHLGLEPRDEVVQAVLDSTIFFPEDEPLFSSNGCKMVASRIAFFL.

An N-terminal signal peptide occupies residues 1–26 (MAAATRSCRPWGSLLGLIWLVSAAAA). 93-100 (GWTGTGKS) contacts ATP. Asn-149 is a glycosylation site (N-linked (GlcNAc...) asparagine).

Belongs to the ClpA/ClpB family. Torsin subfamily. In terms of assembly, homohexamer. Interacts with TOR1AIP1.

The protein localises to the endoplasmic reticulum lumen. This chain is Torsin-2A (TOR2A), found in Bos taurus (Bovine).